A 201-amino-acid polypeptide reads, in one-letter code: Oligoribonuclease (201 aa).

The Exonuclease domain occupies 20–183 (LVWLDMEMTG…ADIHESIDEL (164 aa)). Tyrosine 141 is a catalytic residue.

It belongs to the oligoribonuclease family.

It is found in the cytoplasm. In terms of biological role, 3'-to-5' exoribonuclease specific for small oligoribonucleotides. The polypeptide is Oligoribonuclease (Burkholderia pseudomallei (strain 1106a)).